Consider the following 2208-residue polypeptide: MEESLRETKLLISRYLRQDERIARQKLAFLGQSEPRSLLIEGLKLLSLCIEIDSCDTNCCTHNTEGQSVENFLFQNHILCPSLPLVVPDGMKLNGNILIILECFVRSNPTNFQQKYQEDSVKLDSLKGDLERAGISLIPIIDGRTSYYNSLMEEWVCDQFRHNLFKLLEFEQENNALFEESEYLRLCESLNVSGGRASGAQGLHSLLDCRGEHYNEILKACHIGIDPSIGGVELKGQIENLYQVFRQKLKKGVIKHQFRKVDQKSLLKEYCEMYKGIGICGVEETTVDALAAELPNISPILRYIHLRIDSESNAEVNEISNLPTGLRSAFNKVKSLKVLNTRRKLLLLIDTIILMSHCYVRELFPTLCERDWLGSSFFSVGDRLVSVGAIQHDLSKWLKRRLKANGGVGQKSTELHKMINTMIQKSSKALGDVGLSFESYGVSFDFLNKVGLEEIMRFKIVGVTPTISYIKTNQQPPIPLREFSAEDDSDLKMLSSLSLSLVNSMKTSSTVKTRQNAMGRERYRVVQCKECYYQELGNEYRDLVLLYQKTGEGSKCYSVNSKRVGEICSFYADPKRYFCPIFSENVITKVIDTMMTWLMGIVELEDSLRDIKKLTKMILLVILCQPSKRSQKLLQNLRYFIMAFVSDYHHVELFDKLREELITDAEFFLFKLLGKILTILLNDEVSTMLNNRFKFILNISYFCHFITKETPDRLTDQIKCFEKYLEPKIQFGSLTVNPKETPTDEEKDDILHGVNMFLSKKTCDEVDDPPSKKPGVSKKVFSLMLSAFNSGLLFKESELKKGMKDPLEDSGSATALDLASNKSVVINKYTKDGRVLDYNYDKLVSVAVCQLSEIFSRKGKYLLNKEDYDYKIQEVLSSLVIGSSKSEQPEEILDVDSDYMDQLKASVERVLDQYKPNRGVRSQNNDKSVNDLKIIVEDELSRRLILGELSYHLVEDFDKGLLSENFYKEVCEKAFNNKDFRTKYFYDSEAGLCPIEKMTQALATRTYMSGEYFHCFKSLLLQMDANKLSGKYSHYKSQNLNFRFDHGRLMDDSRISERESNSEALSKALSLVNCLTSALKNLCFYSQESPSSYTETGPDTGRMKFSLSYKEQVGGNRELYIGDLRTKMFTRFVEDYFESYTKQLEGSCLNNEKEFEKAILGMKLGVSLAHASYSLDHSKWGPMMCPFLFLMLYRNLSPKLKGTEVELKGCDNISTILSWHIHKLVEVPFNVVTAMMRSYIKRKLGIMKDTSQTITESLFFSEFERGVIPSHFSSVLDMGQGILHNTSDFYGLISERFINYALRLVSGNPIEAYTSSDDQISLFSHKFTELMDTDPEEFLIYLEFHNYLSSLLNKFISPKSVVGRFVAEFKSRFYVWGDEVPLLSKFVAASLHNIKCKEPHQLAETVDTIIDQAVANGVPVSVCNEVQKRTLRLLEFSKYPIDPFLLHSDSDVKDWVDGNRGYRIMRVIEQTLPEGTASVRSLLRILYNKLKSNELHEEFASAYLSQNRSETLVGLAELMGVKPPSTEDLMICWLNLTACHPLRMVLRQKVIYPSALNLEEEKVPTLIRTLQNKLSSGFTRGAQKLLSEAVNKSAFQSSIASGFVGLCKTLGSKCVRDPERESHYIKSIIQYLQTHCNVKPLNKGHLNLWVYESKTDDTQSASVKPWQIELLRPLLWDYLCIALSTSLEIGPWVLGEPVFKVKSDFWKPRPCDYFPLRPAHNRILEDRIGMNHIIHAVRRLYPEMFEKHLLPYMSDLAAMKLKWSPRIKFLDLCVTLDVNCEALSLISHVVKWKREEHYIVLSDDLLVSHDRKHTTLMDETVVSTSDVADNFLKQIYFESFVKPFVATSRTLGSFSWFPHRSSLPQGEGIERLGPFSTFIEKVVFKGIERPMYRYDLFMGYSWLDYEIELAHLNQSQLIASGLTEESCFEDVDQFWHYLSTLKVGSVKLSKTVRLTQKTQGKLQGQKFSVHLNFTGFITNSCTFVPKQLEVLYSGPVDEHFVIDCWSLLKSDREFKAGASEWFVHSDVVDAYISTASPSSEAYPLDVWLEPDLLELSVSDISKVGPEVNIVPLVVEDGHLLELKEKVAIINPVILDQDIEVFINELKEDHWDLLVCKFADILKHRQCCNLYLINVDILTIALRILNDKAEEFISKSMQEIDQWFDFKGYSLCFSKSRRQVMRHSSTGTMRLKGRLCQPAFYVEVVEEID.

An endonuclease region spans residues 26–291 (KLAFLGQSEP…VEETTVDALA (266 aa)). Mn(2+) is bound by residues glutamate 51, aspartate 89, and glutamate 102. Lysine 115 is a catalytic residue. Positions 1160–1356 (LGMKLGVSLA…YLSSLLNKFI (197 aa)) constitute a RdRp catalytic domain. Aspartate 1318 is a binding site for Mg(2+).

The protein belongs to the Bunyavirales RNA polymerase family. In terms of assembly, homomultimer; the oligomeric structure is essential for the polymerase activity. Interacts with nucleoprotein N. Interacts with protein Z; this interaction inhibits viral transcription and replication, Z partially blocks the product exit tunnel for the releasing nascent RNA product. It depends on Mn(2+) as a cofactor. Requires Mg(2+) as cofactor.

It localises to the virion. The protein localises to the host cytoplasm. It catalyses the reaction RNA(n) + a ribonucleoside 5'-triphosphate = RNA(n+1) + diphosphate. In terms of biological role, RNA-dependent RNA polymerase, which is responsible for the replication and transcription of the viral RNA genome using antigenomic RNA as an intermediate. During transcription, synthesizes subgenomic RNAs and assures their capping by a cap-snatching mechanism, which involves the endonuclease activity cleaving the host capped pre-mRNAs. These short capped RNAs are then used as primers for viral transcription. The 3'-end of subgenomic mRNAs molecules are heterogeneous and not polyadenylated. The replicase function is to direct synthesis of antigenomic and genomic RNA which are encapsidated and non capped. As a consequence of the use of the same enzyme for both transcription and replication, these mechanisms need to be well coordinated. These processes may be regulated by proteins N and Z in a dose-dependent manner. Z protein inhibits the viral polymerase L und thus the viral transcription and RNA synthesis. This Ippy mammarenavirus (isolate Rat/Central African Republic/Dak An B 188 d/1970) (IPPYV) protein is RNA-directed RNA polymerase L.